Consider the following 244-residue polypeptide: Probable phosphatase CA_C0509 (244 aa).

The Zn(2+) site is built by histidine 8, histidine 10, histidine 16, histidine 41, glutamate 74, histidine 102, histidine 132, aspartate 193, and histidine 195.

It belongs to the PHP family. Zn(2+) is required as a cofactor.

The protein is Probable phosphatase CA_C0509 of Clostridium acetobutylicum (strain ATCC 824 / DSM 792 / JCM 1419 / IAM 19013 / LMG 5710 / NBRC 13948 / NRRL B-527 / VKM B-1787 / 2291 / W).